Here is a 491-residue protein sequence, read N- to C-terminus: UDP-N-acetylmuramate--L-alanine ligase (491 aa).

126-132 is a binding site for ATP; sequence GTHGKTT.

It belongs to the MurCDEF family.

The protein resides in the cytoplasm. The catalysed reaction is UDP-N-acetyl-alpha-D-muramate + L-alanine + ATP = UDP-N-acetyl-alpha-D-muramoyl-L-alanine + ADP + phosphate + H(+). Its pathway is cell wall biogenesis; peptidoglycan biosynthesis. Functionally, cell wall formation. This Salmonella paratyphi C (strain RKS4594) protein is UDP-N-acetylmuramate--L-alanine ligase.